Reading from the N-terminus, the 539-residue chain is Protein TIC 55, chloroplastic (539 aa).

The N-terminal 50 residues, 1 to 50 (MAVPFLSSSLQLTPTSPILFTKVTPTPIIHNHRSTCTIPTKPRLRLLRRS), are a transit peptide targeting the chloroplast. Ala-51 is modified (N-acetylalanine). Residues 51–482 (AVAGTAVSDQ…VIKSFELWKN (432 aa)) are Stromal-facing. The region spanning 88–193 (WYPLYLTKNV…VKDSQGVVWV (106 aa)) is the Rieske domain. The [2Fe-2S] cluster site is built by Cys-129, His-131, Cys-148, and His-151. Fe cation-binding residues include His-242 and His-247. The Redox-active motif motif lies at 467–470 (CRSC). A helical transmembrane segment spans residues 483–500 (ILSATAVALTALAILVVS). Topologically, residues 501–504 (RQWK) are chloroplast intermembrane. Residues 505–527 (AVLLGSAALCSAAAYTCLRAINL) form a helical membrane-spanning segment. Residues 528 to 539 (NTNNFIRTHRRL) are Stromal-facing.

In terms of assembly, part of the Tic complex. Interacts with TIC62 and TIC110. [2Fe-2S] cluster serves as cofactor. As to expression, highly expressed in green tissues and very low levels in non-photosynthetic tissues such as roots and etiolated seedlings.

It localises to the plastid. Its subcellular location is the chloroplast inner membrane. Its function is as follows. Involved in protein precursor import into chloroplasts. Part of the redox regulon consisting of TIC32, TIC 55 and TIC62. The chain is Protein TIC 55, chloroplastic (TIC55) from Arabidopsis thaliana (Mouse-ear cress).